The chain runs to 293 residues: Proline iminopeptidase (293 aa).

The AB hydrolase-1 domain occupies 28–277 (PLVLLHGGPG…NCSHMSFVQK (250 aa)). The active-site Nucleophile is Ser105. The active site involves Asp244. His271 acts as the Proton donor in catalysis.

Belongs to the peptidase S33 family.

The protein resides in the cell envelope. It carries out the reaction Release of N-terminal proline from a peptide.. Its function is as follows. Releases the N-terminal proline from various substrates. In Lactobacillus acidophilus (strain ATCC 700396 / NCK56 / N2 / NCFM), this protein is Proline iminopeptidase.